The primary structure comprises 432 residues: Tyrosine--tRNA ligase (432 aa).

Tyr35 contributes to the L-tyrosine binding site. Positions 40–49 (PTAGSLHVGH) match the 'HIGH' region motif. L-tyrosine is bound by residues Tyr175 and Gln179. Positions 239-243 (KFGKT) match the 'KMSKS' region motif. Residue Lys242 coordinates ATP. One can recognise an S4 RNA-binding domain in the interval 365-422 (PPLVDLFASTGLVPSKSAARRTIQEGGAYLNNAKVTDIEARVSEADLLHGRYLVLRRG).

The protein belongs to the class-I aminoacyl-tRNA synthetase family. TyrS type 1 subfamily. In terms of assembly, homodimer.

The protein resides in the cytoplasm. The enzyme catalyses tRNA(Tyr) + L-tyrosine + ATP = L-tyrosyl-tRNA(Tyr) + AMP + diphosphate + H(+). Functionally, catalyzes the attachment of tyrosine to tRNA(Tyr) in a two-step reaction: tyrosine is first activated by ATP to form Tyr-AMP and then transferred to the acceptor end of tRNA(Tyr). The sequence is that of Tyrosine--tRNA ligase from Thermobifida fusca (strain YX).